Here is a 503-residue protein sequence, read N- to C-terminus: Cytosol aminopeptidase (503 aa).

Mn(2+)-binding residues include K269 and D274. K281 is a catalytic residue. Residues D292, D351, and E353 each coordinate Mn(2+). Residue R355 is part of the active site.

Belongs to the peptidase M17 family. The cofactor is Mn(2+).

Its subcellular location is the cytoplasm. It catalyses the reaction Release of an N-terminal amino acid, Xaa-|-Yaa-, in which Xaa is preferably Leu, but may be other amino acids including Pro although not Arg or Lys, and Yaa may be Pro. Amino acid amides and methyl esters are also readily hydrolyzed, but rates on arylamides are exceedingly low.. The catalysed reaction is Release of an N-terminal amino acid, preferentially leucine, but not glutamic or aspartic acids.. Its function is as follows. Presumably involved in the processing and regular turnover of intracellular proteins. Catalyzes the removal of unsubstituted N-terminal amino acids from various peptides. This is Cytosol aminopeptidase from Vibrio cholerae serotype O1 (strain ATCC 39541 / Classical Ogawa 395 / O395).